A 140-amino-acid chain; its full sequence is Large ribosomal subunit protein uL16 (140 aa).

The segment at 1 to 24 is disordered; that stretch reads MALAPARTKYRKSQKGSRAGNAKR.

It belongs to the universal ribosomal protein uL16 family. In terms of assembly, part of the 50S ribosomal subunit.

In terms of biological role, binds 23S rRNA and is also seen to make contacts with the A and possibly P site tRNAs. The sequence is that of Large ribosomal subunit protein uL16 from Opitutus terrae (strain DSM 11246 / JCM 15787 / PB90-1).